The primary structure comprises 281 residues: Insulin-like growth factor-binding protein 7 (281 aa).

Residues 1 to 25 form the signal peptide; that stretch reads MERPPRALLLGAAGLLLLLLPLSSS. The region spanning 27 to 113 is the IGFBP N-terminal domain; it reads SSDACGPCVP…PATLAVCVCK (87 aa). Cystine bridges form between cysteine 31/cysteine 56, cysteine 34/cysteine 58, cysteine 39/cysteine 59, cysteine 47/cysteine 62, cysteine 70/cysteine 86, cysteine 80/cysteine 110, cysteine 112/cysteine 130, and cysteine 119/cysteine 155. A Kazal-like domain is found at 98–157; the sequence is GAAAGGPATLAVCVCKSRYPVCGSNGITYPSGCQLRAASLRAESRGEKAITQVSKGTCEQ. The Ig-like C2-type domain occupies 159 to 263; the sequence is PSIVTPPKDI…GQASAAAKIT (105 aa). An N-linked (GlcNAc...) asparagine glycan is attached at asparagine 170. Cysteine 180 and cysteine 247 are disulfide-bonded. Serine 238 is subject to Phosphoserine.

As to quaternary structure, may interact with VPS24/CHMP3; the relevance of such interaction however remains unclear. Interacts with CD93; this interaction plays a role in endothelial cells angiogenesis. N-glycosylated. In terms of tissue distribution, expressed at high levels in lung, kidney, small intestine, testis and uterus and at moderate levels in liver.

It is found in the secreted. Functionally, binds IGF1 and IGF2 with a relatively low affinity. Stimulates prostacyclin (PGI2) production. Stimulates cell adhesion. Acts as a ligand for CD93 to play a role in angiogenesis. This Mus musculus (Mouse) protein is Insulin-like growth factor-binding protein 7 (Igfbp7).